We begin with the raw amino-acid sequence, 80 residues long: Large ribosomal subunit protein uL24 (80 aa).

The protein belongs to the universal ribosomal protein uL24 family. In terms of assembly, part of the 50S ribosomal subunit.

In terms of biological role, one of two assembly initiator proteins, it binds directly to the 5'-end of the 23S rRNA, where it nucleates assembly of the 50S subunit. One of the proteins that surrounds the polypeptide exit tunnel on the outside of the subunit. In Chlorobium phaeovibrioides (strain DSM 265 / 1930) (Prosthecochloris vibrioformis (strain DSM 265)), this protein is Large ribosomal subunit protein uL24.